Here is a 1177-residue protein sequence, read N- to C-terminus: Chromosome partition protein Smc (1177 aa).

34-41 is an ATP binding site; that stretch reads ANGSGKSN. The stretch at 167–506 forms a coiled coil; it reads SGIAEYDSKK…IAAEAQREVR (340 aa). The 107-residue stretch at 521–627 folds into the SMC hinge domain; sequence GIYGTLAELI…VIVNSMEEAR (107 aa). Residues 659–1012 are a coiled coil; it reads LAVDTTKLRE…NEIEKEKKNV (354 aa).

The protein belongs to the SMC family. Homodimer.

It localises to the cytoplasm. Its function is as follows. Required for chromosome condensation and partitioning. Binds single-stranded but not double-stranded DNA. The polypeptide is Chromosome partition protein Smc (Pyrococcus furiosus (strain ATCC 43587 / DSM 3638 / JCM 8422 / Vc1)).